Here is a 158-residue protein sequence, read N- to C-terminus: MQGRLSAWLVKHELVHRSLGFDYRGIETLQIKSEDWYSIAVILYAYGYNYLRSQCAYDAAPGGLLASVYHLTRIQYGIDQPEEVCIKVFVPRTNTRIPSVFWIWKSADFQERESYDMLGISYENHPRLKRILMPESWIGWPLRKDYIAPNFYEIQDAH.

It belongs to the complex I 30 kDa subunit family. As to quaternary structure, NDH is composed of at least 16 different subunits, 5 of which are encoded in the nucleus.

It is found in the plastid. The protein localises to the chloroplast thylakoid membrane. The catalysed reaction is a plastoquinone + NADH + (n+1) H(+)(in) = a plastoquinol + NAD(+) + n H(+)(out). It carries out the reaction a plastoquinone + NADPH + (n+1) H(+)(in) = a plastoquinol + NADP(+) + n H(+)(out). NDH shuttles electrons from NAD(P)H:plastoquinone, via FMN and iron-sulfur (Fe-S) centers, to quinones in the photosynthetic chain and possibly in a chloroplast respiratory chain. The immediate electron acceptor for the enzyme in this species is believed to be plastoquinone. Couples the redox reaction to proton translocation, and thus conserves the redox energy in a proton gradient. This Piper cenocladum (Ant piper) protein is NAD(P)H-quinone oxidoreductase subunit J, chloroplastic.